The following is a 522-amino-acid chain: 3-octaprenyl-4-hydroxybenzoate carboxy-lyase (522 aa).

N181 contacts Mn(2+). Residues 184–186 (IYR), 198–200 (RWL), and 203–204 (RG) each bind prenylated FMN. Residue E247 participates in Mn(2+) binding. Catalysis depends on D322, which acts as the Proton donor.

Belongs to the UbiD family. As to quaternary structure, homohexamer. The cofactor is prenylated FMN. It depends on Mn(2+) as a cofactor.

Its subcellular location is the cell membrane. The catalysed reaction is a 4-hydroxy-3-(all-trans-polyprenyl)benzoate + H(+) = a 2-(all-trans-polyprenyl)phenol + CO2. Its pathway is cofactor biosynthesis; ubiquinone biosynthesis. Functionally, catalyzes the decarboxylation of 3-octaprenyl-4-hydroxy benzoate to 2-octaprenylphenol, an intermediate step in ubiquinone biosynthesis. The protein is 3-octaprenyl-4-hydroxybenzoate carboxy-lyase of Paraburkholderia xenovorans (strain LB400).